We begin with the raw amino-acid sequence, 366 residues long: GTP cyclohydrolase 1 type 2 homolog (366 aa).

Positions 64, 65, 102, 326, and 329 each coordinate Zn(2+).

It belongs to the GTP cyclohydrolase I type 2/NIF3 family. In terms of assembly, homohexamer.

This is GTP cyclohydrolase 1 type 2 homolog from Staphylococcus aureus (strain COL).